We begin with the raw amino-acid sequence, 108 residues long: MSFSRRAKVTKSDIVNQISLNIKNSNEKLEKKYIRLVVDAFFEELKNSLCLNNVIEFRSFGTFELRKRKGRQNARNPQTGEYVNVDDHHVAYFRPGKDLKERVWGIKG.

This sequence belongs to the bacterial histone-like protein family.

Its function is as follows. Histone-like DNA-binding protein which is capable of wrapping DNA to stabilize it, and thus to prevent its denaturation under extreme environmental conditions. The sequence is that of DNA-binding protein HBbu (hbb) from Borrelia turicatae.